The primary structure comprises 398 residues: Calcium-binding and coiled-coil domain-containing protein 2 (398 aa).

The short motif at 133–136 (ILVV) is the CLIR element. Residues 137–301 (TTQGEVEEIE…RENSRLLSYM (165 aa)) are a coiled coil. An LIR-like motif is present at residues 203-206 (DYWE). A disordered region spans residues 314 to 341 (TSDEGGAGQNPGLVYGNPYSGIQESSSP). Residues 323 to 333 (NPGLVYGNPYS) form an interaction with LGALS8 region. Residues 347 to 398 (KKCPICKADDICDHTLEQQQMQALCLNCPICDKIFPATEKQIFEDHVFCHSL) are interaction with MYO6. Residues 371 to 396 (CLNCPICDKIFPATEKQIFEDHVFCH) form a UBZ1-type zinc finger. Cysteine 374, cysteine 377, histidine 392, and histidine 396 together coordinate Zn(2+). Serine 397 carries the post-translational modification Phosphoserine.

It belongs to the CALCOCO family. Dimer. Part of a complex consisting of CALCOCO2, TAX1BP1 and MYO6. Interacts with MYO6. Interacts with GEMIN4. Interacts with ATG8 family members MAP1LC3A, MAP1LC3B, GABARAP, GABARAPL1 and GABARAPL2. Interacts with ATG8 family member MAP1LC3C. Interacts with LGALS8. Interacts with TOM1; the interaction is indirect and is mediated by MYO6, which acts as a bridge between TOM1 and CALCOCO2. Interacts with AZI2.

Its subcellular location is the cytoplasm. It is found in the perinuclear region. The protein localises to the cytoskeleton. It localises to the cytoplasmic vesicle. The protein resides in the autophagosome membrane. Xenophagy-specific receptor required for autophagy-mediated intracellular bacteria degradation. Acts as an effector protein of galectin-sensed membrane damage that restricts the proliferation of infecting pathogens upon entry into the cytosol by targeting LGALS8-associated bacteria for autophagy. Initially orchestrates bacteria targeting to autophagosomes and subsequently ensures pathogen degradation by regulating pathogen-containing autophagosome maturation. Bacteria targeting to autophagosomes relies on its interaction with MAP1LC3A, MAP1LC3B and/or GABARAPL2, whereas regulation of pathogen-containing autophagosome maturation requires the interaction with MAP3LC3C. May play a role in ruffle formation and actin cytoskeleton organization and seems to negatively regulate constitutive secretion. The sequence is that of Calcium-binding and coiled-coil domain-containing protein 2 from Macaca fascicularis (Crab-eating macaque).